Consider the following 228-residue polypeptide: Thymidylate kinase (228 aa).

Over residues methionine 1–serine 10 the composition is skewed to polar residues. The interval methionine 1–glycine 23 is disordered. Position 20 to 27 (glycine 20 to serine 27) interacts with ATP.

It belongs to the thymidylate kinase family.

It carries out the reaction dTMP + ATP = dTDP + ADP. Functionally, phosphorylation of dTMP to form dTDP in both de novo and salvage pathways of dTTP synthesis. In Bradyrhizobium diazoefficiens (strain JCM 10833 / BCRC 13528 / IAM 13628 / NBRC 14792 / USDA 110), this protein is Thymidylate kinase.